The chain runs to 131 residues: MLEEFKKFALKGNVLDLAVGVIIGGAFGKIVTSLVNDIIMPILGLVVGGINFTALEYVLTEKGSEPIVLRYGQFIQTTFDFLIIAFSIFMFIKVLTKFKKKEEEKPASAPKPSKEEMLLSEIRDILKEKAN.

Transmembrane regions (helical) follow at residues 8–28 (FALK…GAFG), 30–50 (IVTS…VGGI), and 72–92 (GQFI…FMFI).

It belongs to the MscL family. Homopentamer.

The protein localises to the cell membrane. Functionally, channel that opens in response to stretch forces in the membrane lipid bilayer. May participate in the regulation of osmotic pressure changes within the cell. In Alkaliphilus oremlandii (strain OhILAs) (Clostridium oremlandii (strain OhILAs)), this protein is Large-conductance mechanosensitive channel.